A 346-amino-acid chain; its full sequence is Peripherin-2 (346 aa).

Residues 1-24 (MALMKTKFNLKRRVKLAQGLWLMN) are Cytoplasmic-facing. Residues 25-43 (WCCVLAGIALFSMGVFLKI) form a helical membrane-spanning segment. Residues 44–61 (ELRKRSEVMDNDESHFVP) lie on the Lumenal side of the membrane. The helical transmembrane segment at 62-80 (NSLILMGSLACALNAFPGK) threads the bilayer. Residues 81–99 (ICYDSLDPTKFPRWKPMLK) are Cytoplasmic-facing. A helical transmembrane segment spans residues 100 to 123 (PYLIICLIFNIFIFFTGVVCFLTR). The Lumenal segment spans residues 124-264 (GSLESTLAHG…LNYYTSMMSS (141 aa)). The N-linked (GlcNAc...) asparagine glycan is linked to Asn-229. The chain crosses the membrane as a helical span at residues 265–290 (MGGMVFLVWIMEMAVMIGLRFLHTCL). Residues 291-346 (ETIANPEDPECESEGWILEKSLKDTIKSSWELVKSMGKLNKVETAGGEEAGVATVS) lie on the Cytoplasmic side of the membrane.

It belongs to the PRPH2/ROM1 family. As to quaternary structure, homodimer; disulfide-linked. Found in both rod and cone photoreceptors. Specifically in the rims and incisures of rod and cone outer segment disks.

It localises to the membrane. Its function is as follows. May be involved in the morphogenesis of retina outer segment disks and the development and maintenance of the retina ultrastructure. This chain is Peripherin-2 (prph2), found in Xenopus laevis (African clawed frog).